The sequence spans 243 residues: UPF0246 protein gbs2036 (243 aa).

The protein belongs to the UPF0246 family.

This is UPF0246 protein gbs2036 from Streptococcus agalactiae serotype III (strain NEM316).